The sequence spans 316 residues: Methionyl-tRNA formyltransferase (316 aa).

Position 112-115 (112-115) interacts with (6S)-5,6,7,8-tetrahydrofolate; that stretch reads SLLP.

It belongs to the Fmt family.

It carries out the reaction L-methionyl-tRNA(fMet) + (6R)-10-formyltetrahydrofolate = N-formyl-L-methionyl-tRNA(fMet) + (6S)-5,6,7,8-tetrahydrofolate + H(+). In terms of biological role, attaches a formyl group to the free amino group of methionyl-tRNA(fMet). The formyl group appears to play a dual role in the initiator identity of N-formylmethionyl-tRNA by promoting its recognition by IF2 and preventing the misappropriation of this tRNA by the elongation apparatus. This is Methionyl-tRNA formyltransferase from Actinobacillus pleuropneumoniae serotype 7 (strain AP76).